Reading from the N-terminus, the 485-residue chain is DNA polymerase subunit gamma-2 (485 aa).

The interval 28-67 (RQPEQLSKGTGSFVGPVRSQAELPRNEPREAPESGGEGSE) is disordered.

Heterotrimer composed of a catalytic subunit and a homodimer of accessory subunits (POLG:POLG2).

The protein localises to the mitochondrion. It localises to the mitochondrion matrix. The protein resides in the mitochondrion nucleoid. Functionally, accessory subunit of DNA polymerase gamma solely responsible for replication of mitochondrial DNA (mtDNA). Acts as an allosteric regulator of the holoenzyme activities. Enhances the polymerase activity and the processivity of POLG by increasing its interactions with the DNA template. Suppresses POLG exonucleolytic proofreading especially toward homopolymeric templates bearing mismatched termini. Binds to single-stranded DNA. The sequence is that of DNA polymerase subunit gamma-2 (POLG2) from Bos taurus (Bovine).